The chain runs to 491 residues: Aspartyl/glutamyl-tRNA(Asn/Gln) amidotransferase subunit B (491 aa).

It belongs to the GatB/GatE family. GatB subfamily. In terms of assembly, heterotrimer of A, B and C subunits.

It catalyses the reaction L-glutamyl-tRNA(Gln) + L-glutamine + ATP + H2O = L-glutaminyl-tRNA(Gln) + L-glutamate + ADP + phosphate + H(+). The enzyme catalyses L-aspartyl-tRNA(Asn) + L-glutamine + ATP + H2O = L-asparaginyl-tRNA(Asn) + L-glutamate + ADP + phosphate + 2 H(+). Functionally, allows the formation of correctly charged Asn-tRNA(Asn) or Gln-tRNA(Gln) through the transamidation of misacylated Asp-tRNA(Asn) or Glu-tRNA(Gln) in organisms which lack either or both of asparaginyl-tRNA or glutaminyl-tRNA synthetases. The reaction takes place in the presence of glutamine and ATP through an activated phospho-Asp-tRNA(Asn) or phospho-Glu-tRNA(Gln). The polypeptide is Aspartyl/glutamyl-tRNA(Asn/Gln) amidotransferase subunit B (Burkholderia cenocepacia (strain HI2424)).